The primary structure comprises 868 residues: DNA mismatch repair protein MutS (868 aa).

Residue 621–628 coordinates ATP; it reads GPNMGGKS. The segment at 803–852 is disordered; sequence LESGDGGDTGSAQLPLFGPEPVFPPPAQPEPEPDPIREAVENLDPDGLTP. The span at 823–832 shows a compositional bias: pro residues; it reads PVFPPPAQPE.

The protein belongs to the DNA mismatch repair MutS family.

Functionally, this protein is involved in the repair of mismatches in DNA. It is possible that it carries out the mismatch recognition step. This protein has a weak ATPase activity. The chain is DNA mismatch repair protein MutS from Halorhodospira halophila (strain DSM 244 / SL1) (Ectothiorhodospira halophila (strain DSM 244 / SL1)).